The chain runs to 165 residues: Anaphase-promoting complex subunit 11 (165 aa).

The RING-type; atypical zinc finger occupies cysteine 52–arginine 95.

As to quaternary structure, the APC/C is composed of at least 13 subunits that stay tightly associated throughout the cell cycle: APC1, APC2, APC4, APC5, APC9, APC11, CDC16, CDC23, CDC26, CDC27, DOC1, MND2 and SWM1.

Its pathway is protein modification; protein ubiquitination. Its function is as follows. Probably catalytic subunit of the anaphase promoting complex/cyclosome (APC/C), a cell cycle-regulated E3 ubiquitin-protein ligase complex that controls progression through mitosis and the G1 phase of the cell cycle. The APC/C is thought to confer substrate specificity and, in the presence of ubiquitin-conjugating E2 enzymes, it catalyzes the formation of protein-ubiquitin conjugates that are subsequently degraded by the 26S proteasome. In early mitosis, the APC/C is activated by CDC20 and targets securin PDS1, the B-type cyclin CLB5, and other anaphase inhibitory proteins for proteolysis, thereby triggering the separation of sister chromatids at the metaphase-to-anaphase transition. In late mitosis and in G1, degradation of CLB5 allows activation of the APC/C by CDH1, which is needed to destroy CDC20 and the B-type cyclin CLB2 to allow exit from mitosis and creating the low CDK state necessary for cytokinesis and for reforming prereplicative complexes in G1 prior to another round of replication. APC11 is required to recruit the ubiquitin-conjugating enzyme E2 to the APC/C. This is Anaphase-promoting complex subunit 11 (APC11) from Saccharomyces cerevisiae (strain ATCC 204508 / S288c) (Baker's yeast).